A 2850-amino-acid polypeptide reads, in one-letter code: Hornerin (2850 aa).

Residues Met-1–Leu-81 are S-100-like. 2 consecutive EF-hand domains span residues Asp-13 to Pro-48 and Asn-49 to Ala-84. 7 residues coordinate Ca(2+): Thr-27, Glu-32, Asp-62, Asp-64, Asn-66, Lys-68, and Glu-73. 13 consecutive repeat copies span residues Ser-97 to His-187, Gln-188 to Gly-278, Ser-279 to Gly-369, His-370 to Gly-460, His-474 to Gly-566, Gln-593 to Gly-683, Ser-685 to Gly-747, Leu-748 to Gly-836, Ser-839 to His-875, His-876 to Gly-965, Gln-966 to Gly-1004, Pro-1007 to Gly-1097, and Gln-1098 to Gly-1188. Over residues Lys-100–Glu-110 the composition is skewed to basic and acidic residues. Disordered stretches follow at residues Lys-100–Ser-154 and Ser-166–Ser-2817. Positions Ser-125–Val-144 are enriched in polar residues. Composition is skewed to low complexity over residues Gly-167–Arg-192 and Gly-226–Gly-248. The span at Ser-249–Gln-259 shows a compositional bias: gly residues. Low complexity-rich tracts occupy residues Ser-276–Ser-308 and Gly-317–Gly-421. Residues Gln-422–Ser-433 show a composition bias toward gly residues. Composition is skewed to low complexity over residues Ser-449–Phe-465 and Glu-473–Gly-482. Gly residues predominate over residues Ser-483 to Gln-493. Composition is skewed to low complexity over residues His-494–Gly-529, Ser-555–Ser-661, Gly-670–Ser-724, Arg-732–His-765, Gly-782–His-806, and Gly-818–Glu-871. Ser-659 and Ser-661 each carry phosphoserine. The span at Gly-884–Ser-900 shows a compositional bias: gly residues. Residue Ser-890 is modified to Phosphoserine. 2 stretches are compositionally biased toward low complexity: residues Gly-901–Arg-921 and Gly-931–His-996. Phosphoserine occurs at positions 993 and 1008. 2 stretches are compositionally biased toward low complexity: residues Gly-1019–Leu-1050 and Ser-1057–Tyr-1115. The segment covering Gly-1116 to Gly-1132 has biased composition (gly residues). 2 stretches are compositionally biased toward low complexity: residues Ser-1133 to Gln-1156 and Gly-1166 to Gly-1184. The segment covering Ser-1185–Gln-1195 has biased composition (gly residues). Residue Arg-1205 is modified to Omega-N-methylarginine. 2 stretches are compositionally biased toward low complexity: residues Ser-1211–His-1232 and Gly-1253–Ser-1276. Copy 14 of the repeat occupies Ser-1215–Gly-1305. The segment covering His-1280–Gly-1301 has biased composition (polar residues). 5 stretches are compositionally biased toward low complexity: residues Ser-1309–Thr-1322, Gly-1331–Tyr-1349, Gly-1370–Arg-1390, Gly-1400–Ser-1438, and Ser-1445–His-1466. A run of 16 repeats spans residues Gln-1332–Gly-1422, His-1423–Gly-1474, Pro-1477–Gly-1567, Gln-1568–Gly-1658, Ser-1685–Gly-1775, Gln-1802–Gly-1892, His-1893–Gly-1944, Pro-1947–Gly-2037, Gln-2038–Gly-2128, Ser-2155–Gly-2245, Gln-2272–Gly-2362, His-2363–Gly-2414, Pro-2417–Gly-2507, Gln-2508–Gly-2598, Ser-2625–Gly-2715, and His-2716–Gly-2806. Ser-1463 and Ser-1478 each carry phosphoserine. Low complexity-rich tracts occupy residues Gly-1489–Leu-1520 and Ser-1527–Tyr-1585. Over residues Gly-1586–Gly-1602 the composition is skewed to gly residues. 2 stretches are compositionally biased toward low complexity: residues Ser-1603–Gln-1626 and Gly-1636–Gly-1654. Positions Ser-1655 to Gln-1665 are enriched in gly residues. The segment covering Ser-1682–His-1702 has biased composition (low complexity). Phosphoserine occurs at positions 1712 and 1714. Residues Gly-1723–Ser-1746 are compositionally biased toward low complexity. Positions His-1750 to Gly-1771 are enriched in polar residues. Composition is skewed to low complexity over residues Ser-1779 to Ser-1831, Gly-1840 to Arg-1860, and Gly-1870 to His-1936. 2 positions are modified to phosphoserine: Ser-1829 and Ser-1831. 2 positions are modified to phosphoserine: Ser-1933 and Ser-1948. Composition is skewed to low complexity over residues Gly-1959–Leu-1990 and Ser-1997–Tyr-2055. Gly residues predominate over residues Gly-2056–Gly-2072. 2 stretches are compositionally biased toward low complexity: residues Ser-2073–Gln-2096 and Gly-2106–Gly-2124. Over residues Ser-2125–Gln-2135 the composition is skewed to gly residues. 2 stretches are compositionally biased toward low complexity: residues Ser-2151 to His-2172 and Gly-2193 to Ser-2216. Positions His-2220 to Gly-2241 are enriched in polar residues. 4 stretches are compositionally biased toward low complexity: residues Ser-2249–Ser-2301, Gly-2310–Arg-2330, Gly-2340–Ser-2378, and Ser-2385–His-2406. Phosphoserine is present on residues Ser-2299 and Ser-2301. Ser-2403 and Ser-2418 each carry phosphoserine. 2 stretches are compositionally biased toward low complexity: residues Gly-2429–Leu-2460 and Ser-2467–Tyr-2525. The span at Gly-2526 to Gly-2542 shows a compositional bias: gly residues. 2 stretches are compositionally biased toward low complexity: residues Ser-2543–Gln-2566 and Gly-2576–Gly-2594. Residues Ser-2595–Gln-2605 are compositionally biased toward gly residues. The segment covering Ser-2621 to His-2642 has biased composition (low complexity). A phosphoserine mark is found at Ser-2652 and Ser-2654. Positions Gly-2663–Gly-2682 are enriched in low complexity. The span at Glu-2698–Gly-2711 shows a compositional bias: polar residues. Composition is skewed to low complexity over residues Ser-2719–Thr-2732, Gly-2741–Tyr-2759, and Ser-2795–Gly-2816.

The protein belongs to the S100-fused protein family. In the N-terminal section; belongs to the S-100 family. Processed during the process of epidermal differentiation. In terms of processing, forms covalent cross-links mediated by transglutaminase TGM3, between glutamine and the epsilon-amino group of lysine residues (in vitro). Expressed in cornified epidermis, psoriatic and regenerating skin after wounding. Found in the upper granular layer and in the entire cornified layer of epidermis.

It is found in the cytoplasmic granule. Component of the epidermal cornified cell envelopes. The polypeptide is Hornerin (HRNR) (Homo sapiens (Human)).